The chain runs to 408 residues: NADH-quinone oxidoreductase subunit D (408 aa).

The protein belongs to the complex I 49 kDa subunit family. As to quaternary structure, NDH-1 is composed of 14 different subunits. Subunits NuoB, C, D, E, F, and G constitute the peripheral sector of the complex.

It is found in the cell inner membrane. The catalysed reaction is a quinone + NADH + 5 H(+)(in) = a quinol + NAD(+) + 4 H(+)(out). Its function is as follows. NDH-1 shuttles electrons from NADH, via FMN and iron-sulfur (Fe-S) centers, to quinones in the respiratory chain. The immediate electron acceptor for the enzyme in this species is believed to be ubiquinone. Couples the redox reaction to proton translocation (for every two electrons transferred, four hydrogen ions are translocated across the cytoplasmic membrane), and thus conserves the redox energy in a proton gradient. This is NADH-quinone oxidoreductase subunit D from Campylobacter jejuni subsp. doylei (strain ATCC BAA-1458 / RM4099 / 269.97).